The sequence spans 220 residues: Pyridoxine/pyridoxamine 5'-phosphate oxidase (220 aa).

Residues 13–16 (RVEY) and K77 each bind substrate. Residues 72–77 (RTVLCK), 87–88 (FT), K94, and Q116 contribute to the FMN site. The substrate site is built by Y134, R138, and S142. FMN contacts are provided by residues 151–152 (QS) and W197. 203–205 (RVH) contacts substrate. R207 is an FMN binding site.

The protein belongs to the pyridoxamine 5'-phosphate oxidase family. In terms of assembly, homodimer. It depends on FMN as a cofactor.

It catalyses the reaction pyridoxamine 5'-phosphate + O2 + H2O = pyridoxal 5'-phosphate + H2O2 + NH4(+). It carries out the reaction pyridoxine 5'-phosphate + O2 = pyridoxal 5'-phosphate + H2O2. Its pathway is cofactor metabolism; pyridoxal 5'-phosphate salvage; pyridoxal 5'-phosphate from pyridoxamine 5'-phosphate: step 1/1. The protein operates within cofactor metabolism; pyridoxal 5'-phosphate salvage; pyridoxal 5'-phosphate from pyridoxine 5'-phosphate: step 1/1. Catalyzes the oxidation of either pyridoxine 5'-phosphate (PNP) or pyridoxamine 5'-phosphate (PMP) into pyridoxal 5'-phosphate (PLP). The protein is Pyridoxine/pyridoxamine 5'-phosphate oxidase of Mycobacterium sp. (strain KMS).